Here is a 255-residue protein sequence, read N- to C-terminus: Type III pantothenate kinase (255 aa).

6-13 (DIGNTNTV) provides a ligand contact to ATP. Residues Tyr100 and 107–110 (GADR) each bind substrate. The active-site Proton acceptor is Asp109. Residue Asp129 coordinates K(+). ATP is bound at residue Thr132. Thr185 is a binding site for substrate.

Belongs to the type III pantothenate kinase family. In terms of assembly, homodimer. NH4(+) serves as cofactor. It depends on K(+) as a cofactor.

The protein resides in the cytoplasm. The catalysed reaction is (R)-pantothenate + ATP = (R)-4'-phosphopantothenate + ADP + H(+). The protein operates within cofactor biosynthesis; coenzyme A biosynthesis; CoA from (R)-pantothenate: step 1/5. Functionally, catalyzes the phosphorylation of pantothenate (Pan), the first step in CoA biosynthesis. This Desulfosudis oleivorans (strain DSM 6200 / JCM 39069 / Hxd3) (Desulfococcus oleovorans) protein is Type III pantothenate kinase.